The following is a 397-amino-acid chain: Purine ribonucleoside efflux pump NepI (397 aa).

The Cytoplasmic portion of the chain corresponds to 1–21 (MNENIAEKFRADGVARPNWSA). A helical transmembrane segment spans residues 22-42 (VFAVAFCVACLITVEFLPVSL). The Periplasmic segment spans residues 43 to 54 (LTPMAQDLGISE). The chain crosses the membrane as a helical span at residues 55 to 75 (GVAGQSVTVTAFVAMFSSLFI). At 76–85 (TQIIQATDRR) the chain is on the cytoplasmic side. Residues 86-106 (YIVILFAVLLTASCLMVSFAN) traverse the membrane as a helical segment. A topological domain (periplasmic) is located at residue serine 107. Residues 108–128 (FTLLLLGRACLGLALGGFWAI) traverse the membrane as a helical segment. Topologically, residues 129–147 (SASLTMRLVPARTVPKALS) are cytoplasmic. Residues 148–168 (VIFGAVSIALVIAAPLGSFLG) form a helical membrane-spanning segment. At 169 to 175 (GIIGWRN) the chain is on the periplasmic side. The helical transmembrane segment at 176-196 (VFNAAAVMGVLCVIWVVKSLP) threads the bilayer. At 197–215 (SLPGEPSHQKQNMFSLLQR) the chain is on the cytoplasmic side. Residues 216–236 (PGVMAGMIAIFMSFAGQFAFF) traverse the membrane as a helical segment. The Periplasmic portion of the chain corresponds to 237–255 (TYIRPVYMNLAGFDVDGLT). A helical transmembrane segment spans residues 256-276 (LVLLSFGIASFVGTSFSSYVL). Residues 277-281 (KRSVK) lie on the Cytoplasmic side of the membrane. Residues 282 to 302 (LALAGAPLLLALSALTLIVWG) form a helical membrane-spanning segment. Residues 303-305 (SDK) are Periplasmic-facing. A helical membrane pass occupies residues 306–326 (TVAAAIAIIWGLAFALVPVGW). At 327-343 (STWITRSLADQAEKAGS) the chain is on the cytoplasmic side. A helical transmembrane segment spans residues 344 to 364 (IQVAVIQLANTCGAAVGGYAL). At 365-366 (DN) the chain is on the periplasmic side. A helical transmembrane segment spans residues 367 to 387 (FGLLSPLALSGGLMLLTALVV). Residues 388-397 (AAKVRITPMS) lie on the Cytoplasmic side of the membrane.

Belongs to the major facilitator superfamily. DHA1 family. NepI (TC 2.A.1.2.26) subfamily.

The protein resides in the cell inner membrane. The enzyme catalyses inosine(in) + H(+)(out) = inosine(out) + H(+)(in). It catalyses the reaction guanosine(in) + H(+)(out) = guanosine(out) + H(+)(in). Functionally, involved in the efflux of purine ribonucleosides, such as inosine and guanosine. This Salmonella paratyphi A (strain ATCC 9150 / SARB42) protein is Purine ribonucleoside efflux pump NepI.